A 227-amino-acid chain; its full sequence is AN1-type zinc finger protein 3 (227 aa).

The A20-type zinc finger occupies 12–44 (PSLPPRCPCGFWGSSKTMNLCSKCFADFQKKQP). Residues Cys18, Cys20, Cys32, and Cys35 each coordinate Zn(2+). Residues 41 to 151 (KKQPDDDSTP…RPEESGRSKQ (111 aa)) form a disordered region. Low complexity-rich tracts occupy residues 49-59 (TPSTSNSQSDL) and 66-77 (SDNNNTSVTTPT). Polar residues-rich tracts occupy residues 78 to 94 (LSPSQQSLPTELNVTSP) and 111 to 127 (ITPTKRSCGADSQSESE). Over residues 135-148 (RLVENPERPEESGR) the composition is skewed to basic and acidic residues. An AN1-type zinc finger spans residues 151–200 (QKSRRRCFQCQTKLELVQQELGSCRCGYVFCMLHRLPEQHDCTFDHMGRG). Residues Cys157, Cys160, Cys174, Cys176, Cys181, His184, His190, and Cys192 each coordinate Zn(2+).

In Rattus norvegicus (Rat), this protein is AN1-type zinc finger protein 3 (Zfand3).